The following is a 120-amino-acid chain: NAD(P)H-quinone oxidoreductase subunit 3, chloroplastic (120 aa).

3 consecutive transmembrane segments (helical) span residues 10-30, 64-84, and 88-108; these read FWVF…ISGV, IFAL…PWAM, and VLGV…IVGS.

This sequence belongs to the complex I subunit 3 family. As to quaternary structure, NDH is composed of at least 16 different subunits, 5 of which are encoded in the nucleus.

It is found in the plastid. Its subcellular location is the chloroplast thylakoid membrane. It carries out the reaction a plastoquinone + NADH + (n+1) H(+)(in) = a plastoquinol + NAD(+) + n H(+)(out). It catalyses the reaction a plastoquinone + NADPH + (n+1) H(+)(in) = a plastoquinol + NADP(+) + n H(+)(out). Functionally, NDH shuttles electrons from NAD(P)H:plastoquinone, via FMN and iron-sulfur (Fe-S) centers, to quinones in the photosynthetic chain and possibly in a chloroplast respiratory chain. The immediate electron acceptor for the enzyme in this species is believed to be plastoquinone. Couples the redox reaction to proton translocation, and thus conserves the redox energy in a proton gradient. The chain is NAD(P)H-quinone oxidoreductase subunit 3, chloroplastic from Pelargonium hortorum (Common geranium).